A 311-amino-acid polypeptide reads, in one-letter code: D-allose-binding periplasmic protein (311 aa).

Residues 1–23 form the signal peptide; that stretch reads MNKYLKYFSGTLVGLMLSTSAFA.

This sequence belongs to the bacterial solute-binding protein 2 family.

Its subcellular location is the periplasm. Part of the binding-protein-dependent transport system AlsBAC for D-allose. The sequence is that of D-allose-binding periplasmic protein (alsB) from Escherichia coli (strain K12).